The chain runs to 95 residues: Large ribosomal subunit protein uL22c (95 aa).

The protein belongs to the universal ribosomal protein uL22 family. As to quaternary structure, part of the 50S ribosomal subunit.

Its subcellular location is the plastid. It is found in the chloroplast. This protein binds specifically to 23S rRNA. Functionally, the globular domain of the protein is located near the polypeptide exit tunnel on the outside of the subunit, while an extended beta-hairpin is found that lines the wall of the exit tunnel in the center of the 70S ribosome. This is Large ribosomal subunit protein uL22c (rpl22) from Cyanidioschyzon merolae (strain NIES-3377 / 10D) (Unicellular red alga).